The chain runs to 273 residues: Dermonecrotic toxin LsaSicTox-alphaIB1bii (273 aa).

His5 is a catalytic residue. Mg(2+) contacts are provided by Glu25 and Asp27. His41 functions as the Nucleophile in the catalytic mechanism. 2 disulfides stabilise this stretch: Cys45-Cys51 and Cys47-Cys190. Asp85 lines the Mg(2+) pocket.

It belongs to the arthropod phospholipase D family. Class II subfamily. Requires Mg(2+) as cofactor. In terms of tissue distribution, expressed by the venom gland.

It is found in the secreted. It carries out the reaction an N-(acyl)-sphingosylphosphocholine = an N-(acyl)-sphingosyl-1,3-cyclic phosphate + choline. The enzyme catalyses an N-(acyl)-sphingosylphosphoethanolamine = an N-(acyl)-sphingosyl-1,3-cyclic phosphate + ethanolamine. The catalysed reaction is a 1-acyl-sn-glycero-3-phosphocholine = a 1-acyl-sn-glycero-2,3-cyclic phosphate + choline. It catalyses the reaction a 1-acyl-sn-glycero-3-phosphoethanolamine = a 1-acyl-sn-glycero-2,3-cyclic phosphate + ethanolamine. In terms of biological role, dermonecrotic toxins cleave the phosphodiester linkage between the phosphate and headgroup of certain phospholipids (sphingolipid and lysolipid substrates), forming an alcohol (often choline) and a cyclic phosphate. This toxin acts on sphingomyelin (SM). It may also act on ceramide phosphoethanolamine (CPE), lysophosphatidylcholine (LPC) and lysophosphatidylethanolamine (LPE), but not on lysophosphatidylserine (LPS), and lysophosphatidylglycerol (LPG). It acts by transphosphatidylation, releasing exclusively cyclic phosphate products as second products. Induces dermonecrosis, hemolysis, increased vascular permeability, edema, inflammatory response, and platelet aggregation. This is Dermonecrotic toxin LsaSicTox-alphaIB1bii from Loxosceles sabina (Tucson recluse spider).